A 5043-amino-acid polypeptide reads, in one-letter code: Polyketide synthase PksJ (5043 aa).

The adenylation 1 stretch occupies residues 141 to 481 (AVITDRGMHQ…ELPEIETSYT (341 aa)). The 78-residue stretch at 590-667 (RVREEIQKHL…RLASYLSEHE (78 aa)) folds into the Carrier 1 domain. Ser-627 is subject to O-(pantetheine 4'-phosphoryl)serine. The condensation stretch occupies residues 690–989 (QATFQPLSEV…NMLPIRSELN (300 aa)). Positions 1181-1578 (TYRELDEKST…EHPGILECVV (398 aa)) are adenylation 2. In terms of domain architecture, Carrier 2 spans 1654-1729 (TSPKNIQDTV…NISQYITEQR (76 aa)). O-(pantetheine 4'-phosphoryl)serine is present on Ser-1689. Residues 1760–2186 (DDSVAIIGIS…GTNTHAIFEQ (427 aa)) enclose the Ketosynthase family 3 (KS3) 1 domain. Active-site for beta-ketoacyl synthase 1 activity residues include Cys-1932, His-2068, and His-2108. The N-terminal hotdog fold stretch occupies residues 2374–2499 (HPLLHQNTSD…GSAELASAAE (126 aa)). Residues 2374–2661 (HPLLHQNTSD…TRVLEGEVHT (288 aa)) form the PKS/mFAS DH domain. The active-site Proton acceptor; for dehydratase activity is the His-2403. The interval 2513–2661 (GKGKMSPDQF…TRVLEGEVHT (149 aa)) is C-terminal hotdog fold. Catalysis depends on Asp-2575, which acts as the Proton donor; for dehydratase activity. Carrier domains are found at residues 3114 to 3188 (RKLE…VAAY) and 3212 to 3286 (SSLE…TVEH). Residues Ser-3148 and Ser-3246 each carry the O-(pantetheine 4'-phosphoryl)serine modification. The tract at residues 3291–3314 (VQEREKPEGQEELQTKSSEAPKIT) is disordered. A Ketosynthase family 3 (KS3) 2 domain is found at 3339–3779 (FEPVAIVGIS…GVNAHIVIEE (441 aa)). Catalysis depends on for beta-ketoacyl synthase 2 activity residues Cys-3511, His-3646, and His-3695. Residues 3839-3872 (REEMDERLACVAGTMQELEEKLQAFVDGKEETDE) are a coiled coil. Residues 4459 to 4536 (GLLSETQSWL…RFADWLIGSY (78 aa)) enclose the Carrier 5 domain. Ser-4496 carries the O-(pantetheine 4'-phosphoryl)serine modification. One can recognise a Ketosynthase family 3 (KS3) 3 domain in the interval 4588–4992 (AEGIAVVGLS…GTNAHVIVEA (405 aa)). The For beta-ketoacyl synthase 3 activity role is filled by Cys-4743.

Belongs to the ATP-dependent AMP-binding enzyme family. Requires pantetheine 4'-phosphate as cofactor.

Its subcellular location is the cytoplasm. It functions in the pathway antibiotic biosynthesis; bacillaene biosynthesis. Involved in some intermediate steps for the synthesis of the antibiotic polyketide bacillaene which is involved in secondary metabolism. This Bacillus subtilis (strain 168) protein is Polyketide synthase PksJ (pksJ).